A 496-amino-acid polypeptide reads, in one-letter code: Hemophilin secretion modulator (496 aa).

An N-terminal signal peptide occupies residues 1–19; it reads MKRTLLCCLTLLSCPFLYA. Transmembrane regions (beta stranded) follow at residues 198-208, 253-263, 268-277, 291-301, 305-315, 327-337, 341-351, 365-374, 380-389, 403-413, 418-427, 446-455, 462-472, and 486-495; these read WQGSVSAGYTY, DYEASLIKRYA, HGVALRALAF, TININAGYSYF, NQIGVSPLFEH, WGARAEWMHFI, KAFKLEAESKD, SSAFATFWKI, TFFGGLDVLD, QGVRLGLSKSW, NTTLLSSYRW, QNHTFVVQMP, MTPNLTYRYNH, and HNISFKLEHR.

The protein belongs to the Slam family.

Its subcellular location is the cell outer membrane. Functionally, part of a high affinity heme acquisition system. Mediates the secretion of the hemophilin HphA across the outer membrane into the extracellular environment. Plays a supporting role for full virulence. The protein is Hemophilin secretion modulator of Acinetobacter baumannii.